We begin with the raw amino-acid sequence, 233 residues long: MKLFDHAPLSLAWREFLQSEFKKPYFLEIEKRYLEALKSPKTIFPKSSNLFHALNLTPPSAVKIILLGQDPYHSTYLKKEQELPVAMGLSFSVEKNAPIPPSLKNIFKELHANLGVPVSCCGDLSAWAKRGMLLLNAILSVEKNQAASHKYIGWEAFSDQILMRLFKTTAPLIVVLLGKVAQKKIVLIPKNKHIIITAPHPSPLSRGFLGSGVFTSVQKAYREVYRKDFDFSL.

Aspartate 70 serves as the catalytic Proton acceptor.

It belongs to the uracil-DNA glycosylase (UDG) superfamily. UNG family.

The protein resides in the cytoplasm. It catalyses the reaction Hydrolyzes single-stranded DNA or mismatched double-stranded DNA and polynucleotides, releasing free uracil.. Its function is as follows. Excises uracil residues from the DNA which can arise as a result of misincorporation of dUMP residues by DNA polymerase or due to deamination of cytosine. In Helicobacter pylori (strain P12), this protein is Uracil-DNA glycosylase.